A 722-amino-acid chain; its full sequence is Polyribonucleotide nucleotidyltransferase (722 aa).

The Mg(2+) site is built by Asp495 and Asp501. The region spanning 562–621 (PRLLSFRIDPELIGTVIGPGGRTIKGITERTNTKIDIEDGGIVTIASHDGVAAEEAQKII) is the KH domain. One can recognise an S1 motif domain in the interval 631-699 (GEIFTGSITR…NRGRINLTLR (69 aa)). Over residues 701-711 (VSQNNNDMNYP) the composition is skewed to polar residues. Residues 701 to 722 (VSQNNNDMNYPQPTPTPVAPLN) form a disordered region. The segment covering 712-722 (QPTPTPVAPLN) has biased composition (pro residues).

It belongs to the polyribonucleotide nucleotidyltransferase family. Requires Mg(2+) as cofactor.

It localises to the cytoplasm. It carries out the reaction RNA(n+1) + phosphate = RNA(n) + a ribonucleoside 5'-diphosphate. In terms of biological role, involved in mRNA degradation. Catalyzes the phosphorolysis of single-stranded polyribonucleotides processively in the 3'- to 5'-direction. This chain is Polyribonucleotide nucleotidyltransferase, found in Prochlorococcus marinus (strain MIT 9211).